The sequence spans 171 residues: Small ribosomal subunit protein uS13 (171 aa).

Residues 1 to 11 (MAKGSANNVKV) show a composition bias toward polar residues. Disordered stretches follow at residues 1-24 (MAKG…EKKE) and 144-164 (EKGK…GLSI). Over residues 144-158 (EKGKKVRGQRTRSNG) the composition is skewed to basic residues.

It belongs to the universal ribosomal protein uS13 family. As to quaternary structure, part of the 30S ribosomal subunit. Forms a loose heterodimer with protein S19. Forms two bridges to the 50S subunit in the 70S ribosome.

Located at the top of the head of the 30S subunit, it contacts several helices of the 16S rRNA. In the 70S ribosome it contacts the 23S rRNA (bridge B1a) and protein L5 of the 50S subunit (bridge B1b), connecting the 2 subunits; these bridges are implicated in subunit movement. The sequence is that of Small ribosomal subunit protein uS13 from Thermoplasma acidophilum (strain ATCC 25905 / DSM 1728 / JCM 9062 / NBRC 15155 / AMRC-C165).